A 185-amino-acid polypeptide reads, in one-letter code: Large ribosomal subunit protein bL12c (185 aa).

The transit peptide at 1–47 (MASTALSSAFSLLSLPSSSSPAAAAAAAPRSFAVPSRARPRRAVAVV) directs the protein to the chloroplast.

Belongs to the bacterial ribosomal protein bL12 family.

Its subcellular location is the plastid. The protein resides in the chloroplast. This chain is Large ribosomal subunit protein bL12c (RPL12-2), found in Oryza sativa subsp. japonica (Rice).